We begin with the raw amino-acid sequence, 718 residues long: Protein Hook homolog 3 (718 aa).

Met1 is subject to N-acetylmethionine. The segment at 1 to 164 (MFSVESLERA…QELMSKESPV (164 aa)) is sufficient for interaction with microtubules. Ser3 and Ser6 each carry phosphoserine. Residues 10–126 (AELCESLLTW…RMLQLILGCA (117 aa)) enclose the Calponin-homology (CH) domain. Coiled-coil stretches lie at residues 167–433 (GNDA…VQAQ) and 462–667 (EIRE…YIVS). Residue Ser238 is modified to Phosphoserine. Residues 553–718 (EKLHEANNEL…PGHVQPATAR (166 aa)) are required for association with Golgi. Residues 556-718 (HEANNELQKK…PGHVQPATAR (163 aa)) are required for interaction with MSR1. The disordered stretch occupies residues 682-718 (EDRLASTGSGQSFLARQRQATSSRRSYPGHVQPATAR). Phosphoserine occurs at positions 693 and 707. A compositionally biased stretch (low complexity) spans 696-707 (ARQRQATSSRRS).

Belongs to the hook family. In terms of assembly, self-associates. Component of the FTS/Hook/FHIP complex (FHF complex), composed of AKTIP/FTS, FHIP1B, and one or more members of the Hook family of proteins HOOK1, HOOK2, and HOOK3. May interact directly with AKTIP/FTS, HOOK1 and HOOK2. Associates with several subunits of the homotypic vesicular sorting complex (the HOPS complex) including VPS16 and VPS41; these interactions may be indirect. Interacts with MSR1, and this association is stimulated by ligand binding to MSR1. Interacts with microtubules. Part of a tripartite complex with dynein and dynactin, acts an adapter linking the dynein motor complex and dynactin. Interacts with dynein intermediate chain and dynactin (DCTN1). Interacts with CCDC181. Interacts with LRGUK. As to quaternary structure, (Microbial infection) Interacts with Salmonella typhimurium spiC.

The protein localises to the cytoplasm. It is found in the cytoskeleton. The protein resides in the golgi apparatus. Its function is as follows. Acts as an adapter protein linking the dynein motor complex to various cargos and converts dynein from a non-processive to a highly processive motor in the presence of dynactin. Facilitates the interaction between dynein and dynactin and activates dynein processivity (the ability to move along a microtubule for a long distance without falling off the track). Predominantly recruits 2 dyneins, which increases both the force and speed of the microtubule motor. Component of the FTS/Hook/FHIP complex (FHF complex). The FHF complex may function to promote vesicle trafficking and/or fusion via the homotypic vesicular protein sorting complex (the HOPS complex). May regulate clearance of endocytosed receptors such as MSR1. Participates in defining the architecture and localization of the Golgi complex. FHF complex promotes the distribution of AP-4 complex to the perinuclear area of the cell. (Microbial infection) May serve as a target for the spiC protein from Salmonella typhimurium, which inactivates it, leading to a strong alteration in cellular trafficking. The sequence is that of Protein Hook homolog 3 from Homo sapiens (Human).